A 525-amino-acid polypeptide reads, in one-letter code: GMP synthase [glutamine-hydrolyzing] (525 aa).

Positions 8 to 206 constitute a Glutamine amidotransferase type-1 domain; sequence PLLILDFGSQ…VVDICKASTD (199 aa). Residue Cys-85 is the Nucleophile of the active site. Catalysis depends on residues His-180 and Glu-182. Residues 207–400 form the GMPS ATP-PPase domain; the sequence is WTPEHIIDEA…LGLPHDMVYR (194 aa). 234–240 serves as a coordination point for ATP; it reads SGGVDSS.

Homodimer.

The catalysed reaction is XMP + L-glutamine + ATP + H2O = GMP + L-glutamate + AMP + diphosphate + 2 H(+). The protein operates within purine metabolism; GMP biosynthesis; GMP from XMP (L-Gln route): step 1/1. In terms of biological role, catalyzes the synthesis of GMP from XMP. In Legionella pneumophila (strain Paris), this protein is GMP synthase [glutamine-hydrolyzing].